Reading from the N-terminus, the 232-residue chain is Enolase-phosphatase E1 (232 aa).

This sequence belongs to the HAD-like hydrolase superfamily. MasA/MtnC family. Monomer. Mg(2+) serves as cofactor.

The enzyme catalyses 5-methylsulfanyl-2,3-dioxopentyl phosphate + H2O = 1,2-dihydroxy-5-(methylsulfanyl)pent-1-en-3-one + phosphate. It functions in the pathway amino-acid biosynthesis; L-methionine biosynthesis via salvage pathway; L-methionine from S-methyl-5-thio-alpha-D-ribose 1-phosphate: step 3/6. Its pathway is amino-acid biosynthesis; L-methionine biosynthesis via salvage pathway; L-methionine from S-methyl-5-thio-alpha-D-ribose 1-phosphate: step 4/6. Bifunctional enzyme that catalyzes the enolization of 2,3-diketo-5-methylthiopentyl-1-phosphate (DK-MTP-1-P) into the intermediate 2-hydroxy-3-keto-5-methylthiopentenyl-1-phosphate (HK-MTPenyl-1-P), which is then dephosphorylated to form the acireductone 1,2-dihydroxy-3-keto-5-methylthiopentene (DHK-MTPene). In Xanthomonas campestris pv. campestris (strain B100), this protein is Enolase-phosphatase E1.